Here is a 687-residue protein sequence, read N- to C-terminus: DNA ligase (687 aa).

Residues Asp-34–Asp-38, Ser-83–Leu-84, and Glu-117 contribute to the NAD(+) site. The active-site N6-AMP-lysine intermediate is Lys-119. Positions 140, 182, 298, and 322 each coordinate NAD(+). Zn(2+)-binding residues include Cys-416, Cys-419, Cys-434, and Cys-439. Positions Glu-609–Glu-687 constitute a BRCT domain.

It belongs to the NAD-dependent DNA ligase family. LigA subfamily. Mg(2+) is required as a cofactor. It depends on Mn(2+) as a cofactor.

The catalysed reaction is NAD(+) + (deoxyribonucleotide)n-3'-hydroxyl + 5'-phospho-(deoxyribonucleotide)m = (deoxyribonucleotide)n+m + AMP + beta-nicotinamide D-nucleotide.. DNA ligase that catalyzes the formation of phosphodiester linkages between 5'-phosphoryl and 3'-hydroxyl groups in double-stranded DNA using NAD as a coenzyme and as the energy source for the reaction. It is essential for DNA replication and repair of damaged DNA. The protein is DNA ligase of Anaeromyxobacter dehalogenans (strain 2CP-C).